Consider the following 430-residue polypeptide: Formate-dependent phosphoribosylglycinamide formyltransferase (430 aa).

Residues 26–27 (EL) and E86 each bind N(1)-(5-phospho-beta-D-ribosyl)glycinamide. ATP contacts are provided by residues R118, K159, 199-202 (EEHI), and E207. In terms of domain architecture, ATP-grasp spans 123–319 (ETLVKEAKVP…EFALHLRAVL (197 aa)). Mg(2+)-binding residues include E276 and E288. N(1)-(5-phospho-beta-D-ribosyl)glycinamide is bound by residues D295, K375, and 382-383 (RR).

Belongs to the PurK/PurT family. Homodimer.

It catalyses the reaction N(1)-(5-phospho-beta-D-ribosyl)glycinamide + formate + ATP = N(2)-formyl-N(1)-(5-phospho-beta-D-ribosyl)glycinamide + ADP + phosphate + H(+). It functions in the pathway purine metabolism; IMP biosynthesis via de novo pathway; N(2)-formyl-N(1)-(5-phospho-D-ribosyl)glycinamide from N(1)-(5-phospho-D-ribosyl)glycinamide (formate route): step 1/1. In terms of biological role, involved in the de novo purine biosynthesis. Catalyzes the transfer of formate to 5-phospho-ribosyl-glycinamide (GAR), producing 5-phospho-ribosyl-N-formylglycinamide (FGAR). Formate is provided by PurU via hydrolysis of 10-formyl-tetrahydrofolate. This is Formate-dependent phosphoribosylglycinamide formyltransferase from Pyrococcus horikoshii (strain ATCC 700860 / DSM 12428 / JCM 9974 / NBRC 100139 / OT-3).